Here is a 452-residue protein sequence, read N- to C-terminus: Probable phosphoglucosamine mutase (452 aa).

S96 functions as the Phosphoserine intermediate in the catalytic mechanism. Positions 96, 233, 235, and 237 each coordinate Mg(2+). S96 is subject to Phosphoserine.

The protein belongs to the phosphohexose mutase family. Mg(2+) serves as cofactor. In terms of processing, activated by phosphorylation.

The enzyme catalyses alpha-D-glucosamine 1-phosphate = D-glucosamine 6-phosphate. Functionally, catalyzes the conversion of glucosamine-6-phosphate to glucosamine-1-phosphate. The sequence is that of Probable phosphoglucosamine mutase from Pyrococcus furiosus (strain ATCC 43587 / DSM 3638 / JCM 8422 / Vc1).